Here is a 1273-residue protein sequence, read N- to C-terminus: DNA-directed RNA polymerase subunit beta (1273 aa).

The segment at 1252–1273 (ADDQDLVVSSNDEEVSENDERS) is disordered.

Belongs to the RNA polymerase beta chain family. The RNAP catalytic core consists of 2 alpha, 1 beta, 1 beta' and 1 omega subunit. When a sigma factor is associated with the core the holoenzyme is formed, which can initiate transcription.

The catalysed reaction is RNA(n) + a ribonucleoside 5'-triphosphate = RNA(n+1) + diphosphate. Its function is as follows. DNA-dependent RNA polymerase catalyzes the transcription of DNA into RNA using the four ribonucleoside triphosphates as substrates. The protein is DNA-directed RNA polymerase subunit beta of Dehalococcoides mccartyi (strain ATCC BAA-2100 / JCM 16839 / KCTC 5957 / BAV1).